The following is a 31-amino-acid chain: Cyclotide Hyfl-A (31 aa).

The cyclopeptide (Ser-Asn) cross-link spans 1–31; sequence SISCGESCVYIPCTVTALVGCTCKDKVCYLN. Intrachain disulfides connect Cys-4-Cys-21, Cys-8-Cys-23, and Cys-13-Cys-28.

It belongs to the cyclotide family. Bracelet subfamily. Post-translationally, this is a cyclic peptide.

Functionally, probably participates in a plant defense mechanism. The chain is Cyclotide Hyfl-A from Hybanthus floribundus (Greenviolet).